Here is a 180-residue protein sequence, read N- to C-terminus: SAGA-associated factor 11 homolog (180 aa).

Residues 98-119 (CSCPNCNRIVAASRFAPHLEKC) form an SGF11-type zinc finger. The tract at residues 138-180 (RDGGNYFGADEDDEDDADWSGEKRKKKIAPVRTNGSKKNGKTS) is disordered. Residues 146-156 (ADEDDEDDADW) show a composition bias toward acidic residues.

The protein belongs to the SGF11 family. As to quaternary structure, component of some SAGA transcription coactivator-HAT complexes. Within the SAGA complex, participates in a subcomplex of SAGA called the DUB module (deubiquitination module).

It is found in the nucleus. Its function is as follows. Component of the transcription regulatory histone acetylation (HAT) complex SAGA, a multiprotein complex that activates transcription by remodeling chromatin and mediating histone acetylation and deubiquitination. Within the SAGA complex, participates in a subcomplex that specifically deubiquitinates histone H2B. The SAGA complex is recruited to specific gene promoters by activators, where it is required for transcription. The sequence is that of SAGA-associated factor 11 homolog from Aedes aegypti (Yellowfever mosquito).